Here is a 651-residue protein sequence, read N- to C-terminus: Lateral signaling target protein 2 (651 aa).

The interval 294-425 is disordered; sequence VPEDSSSKLT…KENEEDVDEQ (132 aa). A compositionally biased stretch (polar residues) spans 300–310; the sequence is SKLTMSDFRTN. Residues 345–363 are compositionally biased toward low complexity; sequence SEATSLASSGLTSPSSGSE. Residues 373-394 show a composition bias toward acidic residues; the sequence is SDEELDDDVIETASSEENESDS. The span at 395–412 shows a compositional bias: low complexity; sequence NNENVEMVASSGDSSETE. Residues 557-617 form an FYVE-type zinc finger; sequence DEDCEQCTAC…VCNLCYVHRL (61 aa). Residues cysteine 563, cysteine 566, cysteine 579, cysteine 582, cysteine 587, cysteine 590, cysteine 609, and cysteine 612 each contribute to the Zn(2+) site.

The protein belongs to the lst-2 family.

Its function is as follows. Negative regulator of epidermal growth factor receptor (EGFR) signaling. This chain is Lateral signaling target protein 2 (lst-2), found in Caenorhabditis briggsae.